Reading from the N-terminus, the 315-residue chain is Probable cell division protein WhiA (315 aa).

The segment at residues 274 to 308 (SLKNLGELIPGGPISKSGINHRLRKLNEIAEKIRA) is a DNA-binding region (H-T-H motif).

Belongs to the WhiA family.

In terms of biological role, involved in cell division and chromosome segregation. This is Probable cell division protein WhiA from Ligilactobacillus salivarius (strain UCC118) (Lactobacillus salivarius).